The primary structure comprises 315 residues: Glutathione synthetase (315 aa).

Positions K125–E310 constitute an ATP-grasp domain. W151 to G207 is a binding site for ATP. The Mg(2+) site is built by E281 and N283.

This sequence belongs to the prokaryotic GSH synthase family. Mg(2+) is required as a cofactor. The cofactor is Mn(2+).

The enzyme catalyses gamma-L-glutamyl-L-cysteine + glycine + ATP = glutathione + ADP + phosphate + H(+). The protein operates within sulfur metabolism; glutathione biosynthesis; glutathione from L-cysteine and L-glutamate: step 2/2. The protein is Glutathione synthetase of Salmonella typhimurium (strain LT2 / SGSC1412 / ATCC 700720).